Here is a 508-residue protein sequence, read N- to C-terminus: Glycerol kinase (508 aa).

Thr-14 contributes to the ADP binding site. Residues Thr-14, Thr-15, and Ser-16 each contribute to the ATP site. Residue Thr-14 coordinates sn-glycerol 3-phosphate. Arg-18 lines the ADP pocket. Positions 84, 85, and 136 each coordinate sn-glycerol 3-phosphate. 3 residues coordinate glycerol: Arg-84, Glu-85, and Tyr-136. Phosphohistidine; by HPr is present on His-232. Asp-246 serves as a coordination point for sn-glycerol 3-phosphate. Residues Asp-246 and Gln-247 each contribute to the glycerol site. Thr-268 and Gly-311 together coordinate ADP. Residues Thr-268, Gly-311, Gln-315, and Gly-412 each contribute to the ATP site. Gly-412 and Asn-416 together coordinate ADP.

Belongs to the FGGY kinase family. As to quaternary structure, homotetramer and homodimer (in equilibrium). The phosphoenolpyruvate-dependent sugar phosphotransferase system (PTS), including enzyme I, and histidine-containing protein (HPr) are required for the phosphorylation, which leads to the activation of the enzyme.

The enzyme catalyses glycerol + ATP = sn-glycerol 3-phosphate + ADP + H(+). It functions in the pathway polyol metabolism; glycerol degradation via glycerol kinase pathway; sn-glycerol 3-phosphate from glycerol: step 1/1. Its activity is regulated as follows. Activated by phosphorylation and inhibited by fructose 1,6-bisphosphate (FBP). Functionally, key enzyme in the regulation of glycerol uptake and metabolism. Catalyzes the phosphorylation of glycerol to yield sn-glycerol 3-phosphate. The protein is Glycerol kinase of Streptococcus pyogenes serotype M3 (strain ATCC BAA-595 / MGAS315).